The primary structure comprises 523 residues: 2-isopropylmalate synthase (523 aa).

The 263-residue stretch at 5–267 folds into the Pyruvate carboxyltransferase domain; sequence VIIFDTTLRD…ETGINAKEIH (263 aa). Residues Asp-14, His-202, His-204, and Asn-238 each coordinate Mn(2+). The interval 392–523 is regulatory domain; the sequence is KLAQLVVHSD…QKDRSELGGV (132 aa).

The protein belongs to the alpha-IPM synthase/homocitrate synthase family. LeuA type 1 subfamily. Homodimer. It depends on Mn(2+) as a cofactor.

Its subcellular location is the cytoplasm. It carries out the reaction 3-methyl-2-oxobutanoate + acetyl-CoA + H2O = (2S)-2-isopropylmalate + CoA + H(+). Its pathway is amino-acid biosynthesis; L-leucine biosynthesis; L-leucine from 3-methyl-2-oxobutanoate: step 1/4. In terms of biological role, catalyzes the condensation of the acetyl group of acetyl-CoA with 3-methyl-2-oxobutanoate (2-ketoisovalerate) to form 3-carboxy-3-hydroxy-4-methylpentanoate (2-isopropylmalate). The chain is 2-isopropylmalate synthase from Shewanella sediminis (strain HAW-EB3).